Consider the following 378-residue polypeptide: Branched-chain-amino-acid aminotransferase (378 aa).

At K213 the chain carries N6-(pyridoxal phosphate)lysine.

It belongs to the class-IV pyridoxal-phosphate-dependent aminotransferase family. In terms of assembly, homodimer. Pyridoxal 5'-phosphate is required as a cofactor.

The enzyme catalyses L-leucine + 2-oxoglutarate = 4-methyl-2-oxopentanoate + L-glutamate. It catalyses the reaction L-isoleucine + 2-oxoglutarate = (S)-3-methyl-2-oxopentanoate + L-glutamate. The catalysed reaction is L-valine + 2-oxoglutarate = 3-methyl-2-oxobutanoate + L-glutamate. Catalyzes the first reaction in the catabolism of the essential branched chain amino acids leucine, isoleucine, and valine. This chain is Branched-chain-amino-acid aminotransferase (bcaA), found in Dictyostelium discoideum (Social amoeba).